A 433-amino-acid chain; its full sequence is Pyroglutamylated RF-amide peptide receptor (433 aa).

The Extracellular portion of the chain corresponds to 1 to 46 (MQALNITAEQFSRLLSAHNLTREQFIHRYGLRPLVYTPELPARAKV). Residues Asn5 and Asn19 are each glycosylated (N-linked (GlcNAc...) asparagine). A helical transmembrane segment spans residues 47–67 (AFALAGALIFALALFGNSLVI). The Cytoplasmic segment spans residues 68–81 (YVVTRSKAMRTVTN). A helical membrane pass occupies residues 82 to 102 (IFICSLALSDLLIAFFCIPVT). At 103–120 (MLQNISDKWLGGAFICKM) the chain is on the extracellular side. A helical transmembrane segment spans residues 121–141 (VPFVQSTAVVTEILTMTCIAV). The Cytoplasmic portion of the chain corresponds to 142–162 (ERHQGLVHPFKMKWQYTTRRA). The chain crosses the membrane as a helical span at residues 163–183 (FTILGVVWLAAIIVGSPMWHV). At 184 to 212 (QRLEIKYDFLYEKEHICCLEEWASPVHQR) the chain is on the extracellular side. The helical transmembrane segment at 213–233 (IYSTFILVILFLLPLVVMLVL) threads the bilayer. At 234–271 (YSKIGYELWIKKRVGDSSALQTIHGKEMSKIARKKKRA) the chain is on the cytoplasmic side. The chain crosses the membrane as a helical span at residues 272 to 292 (VIMMVTVVALFAACWAPFHVV). Topologically, residues 293-313 (HMMVEYSNFEKEYDDVTIKMV) are extracellular. Residues 314–334 (FAVAQTIGFFNSICNPFVYAF) traverse the membrane as a helical segment. The Cytoplasmic portion of the chain corresponds to 335-433 (MNENFKKNFL…NSTFGSGHEL (99 aa)). The interval 356 to 389 (SSPARKPGNSGISMMQKRAKLSRPQRPVEETKGD) is disordered.

Belongs to the G-protein coupled receptor 1 family. In terms of tissue distribution, highly expressed in the adrenal gland and at moderate levels in the eye and testis. Expressed widely in the brain with high levels in the hypothalamus and moderate levels in the amygdala, basal forebrain, cortex, medulla oblongata, midbrain and thalamus.

It is found in the cell membrane. Its function is as follows. Receptor for the orexigenic neuropeptide QRFP. The activity of this receptor is mediated by G proteins that modulate adenylate cyclase activity and intracellular calcium levels. This chain is Pyroglutamylated RF-amide peptide receptor (Qrfpr), found in Rattus norvegicus (Rat).